Consider the following 152-residue polypeptide: FMN reductase (NADH) RutF (152 aa).

It belongs to the non-flavoprotein flavin reductase family. RutF subfamily.

It catalyses the reaction FMNH2 + NAD(+) = FMN + NADH + 2 H(+). Functionally, catalyzes the reduction of FMN to FMNH2 which is used to reduce pyrimidine by RutA via the Rut pathway. The polypeptide is FMN reductase (NADH) RutF (Shigella sonnei (strain Ss046)).